The chain runs to 79 residues: Defensin-like protein 109 (79 aa).

The N-terminal stretch at 1 to 24 is a signal peptide; it reads MDFTKKILVVFAFTIMLGISSVHC. Cystine bridges form between C41/C76, C47/C68, C54/C74, and C58/C75.

It belongs to the DEFL family.

Its subcellular location is the secreted. The chain is Defensin-like protein 109 from Arabidopsis thaliana (Mouse-ear cress).